The sequence spans 104 residues: Replication restart protein PriB (104 aa).

Residues 1–101 form the SSB domain; the sequence is MTNRLELSGV…LHADHIEIIC (101 aa).

Belongs to the PriB family. In terms of assembly, homodimer. Interacts with PriA and DnaT. Component of the replication restart primosome. Primosome assembly occurs via a 'hand-off' mechanism. PriA binds to replication forks, subsequently PriB then DnaT bind; DnaT then displaces ssDNA to generate the helicase loading substrate.

In terms of biological role, involved in the restart of stalled replication forks, which reloads the replicative helicase on sites other than the origin of replication; the PriA-PriB pathway is the major replication restart pathway. During primosome assembly it facilitates complex formation between PriA and DnaT on DNA; stabilizes PriA on DNA. Stimulates the DNA unwinding activity of PriA helicase. The sequence is that of Replication restart protein PriB from Photobacterium profundum (strain SS9).